Reading from the N-terminus, the 95-residue chain is Cystatin-A2 (95 aa).

A Secondary area of contact motif is present at residues 47–51 (QLVNG).

Belongs to the cystatin family.

Its subcellular location is the cytoplasm. Its function is as follows. Intracellular thiol proteinase inhibitor. Inhibits cathepsin B, but not papain. The polypeptide is Cystatin-A2 (cpiB) (Dictyostelium discoideum (Social amoeba)).